The primary structure comprises 244 residues: Ribonuclease PH (244 aa).

Phosphate contacts are provided by residues arginine 86 and 124-126 (GTR).

Belongs to the RNase PH family. Homohexameric ring arranged as a trimer of dimers.

The catalysed reaction is tRNA(n+1) + phosphate = tRNA(n) + a ribonucleoside 5'-diphosphate. Functionally, phosphorolytic 3'-5' exoribonuclease that plays an important role in tRNA 3'-end maturation. Removes nucleotide residues following the 3'-CCA terminus of tRNAs; can also add nucleotides to the ends of RNA molecules by using nucleoside diphosphates as substrates, but this may not be physiologically important. Probably plays a role in initiation of 16S rRNA degradation (leading to ribosome degradation) during starvation. The polypeptide is Ribonuclease PH (Glaesserella parasuis serovar 5 (strain SH0165) (Haemophilus parasuis)).